The following is a 319-amino-acid chain: Acetylglutamate kinase (319 aa).

Substrate is bound by residues 74 to 75, R96, and N210; that span reads GG.

It belongs to the acetylglutamate kinase family. ArgB subfamily.

The protein localises to the cytoplasm. It carries out the reaction N-acetyl-L-glutamate + ATP = N-acetyl-L-glutamyl 5-phosphate + ADP. Its pathway is amino-acid biosynthesis; L-arginine biosynthesis; N(2)-acetyl-L-ornithine from L-glutamate: step 2/4. Catalyzes the ATP-dependent phosphorylation of N-acetyl-L-glutamate. The polypeptide is Acetylglutamate kinase (Pseudarthrobacter chlorophenolicus (strain ATCC 700700 / DSM 12829 / CIP 107037 / JCM 12360 / KCTC 9906 / NCIMB 13794 / A6) (Arthrobacter chlorophenolicus)).